A 280-amino-acid polypeptide reads, in one-letter code: Feruloyl esterase 1 (280 aa).

The N-terminal stretch at 1–20 (MKAFATRALAFSVAAGQALA) is a signal peptide. 3 disulfide bridges follow: Cys49–Cys278, Cys111–Cys114, and Cys247–Cys254. Residue Asn99 is glycosylated (N-linked (GlcNAc...) asparagine). The Nucleophile role is filled by Ser153. Catalysis depends on Asp214, which acts as the Charge relay system. Residue His267 is the Charge relay system of the active site.

This sequence belongs to the AB hydrolase superfamily. FaeA family. Post-translationally, glycosylated.

The protein resides in the secreted. It catalyses the reaction feruloyl-polysaccharide + H2O = ferulate + polysaccharide.. Metal or basic ions Mn(2+), Ni(+), Mg(2+), and NH(4)(+) decrease the activity by 4.4% to 14.1%. The enzymatic activity is inhibited by Zn(2+) at a low concentration (1 mM) but not a high concentration (5 mM). Loses about a quarter of activity by the addition of 1 mM of Cu(2+) or Fe(3+) and activity is completely suppressed when the concentration was up to 5 mM. Low concentrations (0.25 and 0.5 M) of NaCl improve the activity by 5.6 % or 8.3%, respectively. Involved in degradation of plant cell walls. Hydrolyzes the feruloyl-arabinose ester bond in arabinoxylans, and the feruloyl-galactose ester bond in pectin. The polypeptide is Feruloyl esterase 1 (Penicillium parvum (Eupenicillium parvum)).